The following is a 1026-amino-acid chain: Beta-galactosidase (1026 aa).

Residue Glu-458 is the Proton donor of the active site. Glu-546 (nucleophile) is an active-site residue.

The protein belongs to the glycosyl hydrolase 2 family.

The enzyme catalyses Hydrolysis of terminal non-reducing beta-D-galactose residues in beta-D-galactosides.. The polypeptide is Beta-galactosidase (lacZ) (Streptococcus thermophilus).